Consider the following 247-residue polypeptide: tRNA uridine(34) hydroxylase (247 aa).

The region spanning 123-217 (ITKQDVIVDT…YLEDTQNKNN (95 aa)) is the Rhodanese domain. The active-site Cysteine persulfide intermediate is C177.

This sequence belongs to the TrhO family.

It carries out the reaction uridine(34) in tRNA + AH2 + O2 = 5-hydroxyuridine(34) in tRNA + A + H2O. Its function is as follows. Catalyzes oxygen-dependent 5-hydroxyuridine (ho5U) modification at position 34 in tRNAs. This chain is tRNA uridine(34) hydroxylase, found in Rickettsia bellii (strain RML369-C).